An 86-amino-acid chain; its full sequence is RNA-binding protein Hfq (86 aa).

In terms of domain architecture, Sm spans 9–68 (DPYLNTLRKEKVGVSIYLVNGIKLQGTIESFDQFVILLKNTVSQMVYKHAISTVVPVRPI).

Belongs to the Hfq family. As to quaternary structure, homohexamer.

In terms of biological role, RNA chaperone that binds small regulatory RNA (sRNAs) and mRNAs to facilitate mRNA translational regulation in response to envelope stress, environmental stress and changes in metabolite concentrations. Also binds with high specificity to tRNAs. This Pseudomonas savastanoi pv. phaseolicola (strain 1448A / Race 6) (Pseudomonas syringae pv. phaseolicola (strain 1448A / Race 6)) protein is RNA-binding protein Hfq.